Consider the following 601-residue polypeptide: Chaperone protein DnaK (601 aa).

The residue at position 175 (threonine 175) is a Phosphothreonine; by autocatalysis. The interval 570-601 is disordered; it reads FAQKAASKETSKNEQNEDGSIDAEIKEEDPKA. Residues 575–584 show a composition bias toward basic and acidic residues; sequence ASKETSKNEQ. Over residues 585-601 the composition is skewed to acidic residues; that stretch reads NEDGSIDAEIKEEDPKA.

Belongs to the heat shock protein 70 family.

In terms of biological role, acts as a chaperone. This Mycoplasma mobile (strain ATCC 43663 / 163K / NCTC 11711) (Mesomycoplasma mobile) protein is Chaperone protein DnaK.